The following is a 137-amino-acid chain: Bet1-like protein At4g14600 (137 aa).

The Cytoplasmic portion of the chain corresponds to 1–113; the sequence is MASNPHRSGA…MSIIRSGNNH (113 aa). The 63-residue stretch at 43-105 folds into the t-SNARE coiled-coil homology domain; the sequence is DPMHSDLDDE…KNNIRKLNMS (63 aa). A helical; Anchor for type IV membrane protein transmembrane segment spans residues 114–134; sequence IMHVVLFALLVFFVLYIWSKM. The Vesicular portion of the chain corresponds to 135–137; that stretch reads FKR.

This sequence belongs to the BET1 family.

The protein localises to the golgi apparatus membrane. Its subcellular location is the endoplasmic reticulum membrane. Its function is as follows. Required for vesicular transport from the ER to the Golgi complex. Functions as a SNARE associated with ER-derived vesicles. The sequence is that of Bet1-like protein At4g14600 from Arabidopsis thaliana (Mouse-ear cress).